We begin with the raw amino-acid sequence, 63 residues long: Cecropin-B (63 aa).

Positions 1 to 23 are cleaved as a signal peptide; sequence MNFNKIFVFVALILAISLGNSEA. An Arginine amide modification is found at Arg62.

The protein belongs to the cecropin family. As to expression, strongly expressed in larval, pupal and adult fat body and hemocytes after injection of bacteria. Maximal expression is seen in pupae.

It localises to the secreted. In terms of biological role, cecropins have lytic and antibacterial activity against several Gram-positive and Gram-negative bacteria. The protein is Cecropin-B (CecB) of Drosophila melanogaster (Fruit fly).